We begin with the raw amino-acid sequence, 492 residues long: Protein nucleotidyltransferase YdiU (492 aa).

ATP contacts are provided by Gly88, Gly90, Arg91, Lys111, Asp123, Gly124, Arg174, and Arg181. The active-site Proton acceptor is Asp250. The Mg(2+) site is built by Asn251 and Asp260. Residue Asp260 participates in ATP binding.

Belongs to the SELO family. It depends on Mg(2+) as a cofactor. The cofactor is Mn(2+).

The enzyme catalyses L-seryl-[protein] + ATP = 3-O-(5'-adenylyl)-L-seryl-[protein] + diphosphate. It catalyses the reaction L-threonyl-[protein] + ATP = 3-O-(5'-adenylyl)-L-threonyl-[protein] + diphosphate. The catalysed reaction is L-tyrosyl-[protein] + ATP = O-(5'-adenylyl)-L-tyrosyl-[protein] + diphosphate. It carries out the reaction L-histidyl-[protein] + UTP = N(tele)-(5'-uridylyl)-L-histidyl-[protein] + diphosphate. The enzyme catalyses L-seryl-[protein] + UTP = O-(5'-uridylyl)-L-seryl-[protein] + diphosphate. It catalyses the reaction L-tyrosyl-[protein] + UTP = O-(5'-uridylyl)-L-tyrosyl-[protein] + diphosphate. In terms of biological role, nucleotidyltransferase involved in the post-translational modification of proteins. It can catalyze the addition of adenosine monophosphate (AMP) or uridine monophosphate (UMP) to a protein, resulting in modifications known as AMPylation and UMPylation. This is Protein nucleotidyltransferase YdiU from Rhodopseudomonas palustris (strain ATCC BAA-98 / CGA009).